A 384-amino-acid polypeptide reads, in one-letter code: Geranylgeranyl pyrophosphate synthase (384 aa).

Disordered stretches follow at residues 1-25 (MVPN…TSST) and 39-78 (RPVP…PARY). Polar residues predominate over residues 47-62 (LGQNNTRNRSSSTTAI). Isopentenyl diphosphate contacts are provided by Lys112, Arg115, and His144. The Mg(2+) site is built by Asp151 and Asp155. Arg160 is a dimethylallyl diphosphate binding site. Position 161 (Arg161) interacts with isopentenyl diphosphate. The dimethylallyl diphosphate site is built by Lys238, Thr239, and Gln272. Asp275 is a binding site for Mg(2+). Dimethylallyl diphosphate is bound by residues Asn279, Lys289, and Lys299.

It belongs to the FPP/GGPP synthase family. Mg(2+) serves as cofactor.

It carries out the reaction isopentenyl diphosphate + dimethylallyl diphosphate = (2E)-geranyl diphosphate + diphosphate. The enzyme catalyses isopentenyl diphosphate + (2E)-geranyl diphosphate = (2E,6E)-farnesyl diphosphate + diphosphate. It catalyses the reaction isopentenyl diphosphate + (2E,6E)-farnesyl diphosphate = (2E,6E,10E)-geranylgeranyl diphosphate + diphosphate. The protein operates within secondary metabolite biosynthesis. Catalyzes the trans-addition of the 3 molecules of isopentenyl diphosphate (IPP) onto dimethylallyl diphosphate (DMAPP) to form geranylgeranyl pyrophosphate (GGPP). GGPP is a precursor for the biosynthesis of many secondary metabolites, including the indole diterpenes nodulisporic acids (NA). The protein is Geranylgeranyl pyrophosphate synthase of Hypoxylon pulicicidum.